A 114-amino-acid polypeptide reads, in one-letter code: T cell receptor beta variable 5-5 (114 aa).

Positions 1-21 (MGPGLLCWVLLCLLGAGPVDA) are cleaved as a signal peptide. The Ig-like domain occupies 22-114 (GVTQSPTHLI…SALYLCASSL (93 aa)). Residues cysteine 42 and cysteine 110 are joined by a disulfide bond. The N-linked (GlcNAc...) asparagine glycan is linked to asparagine 90.

Alpha-beta TR is a heterodimer composed of an alpha and beta chain; disulfide-linked. The alpha-beta TR is associated with the transmembrane signaling CD3 coreceptor proteins to form the TR-CD3 (TcR or TCR). The assembly of alpha-beta TR heterodimers with CD3 occurs in the endoplasmic reticulum where a single alpha-beta TR heterodimer associates with one CD3D-CD3E heterodimer, one CD3G-CD3E heterodimer and one CD247 homodimer forming a stable octameric structure. CD3D-CD3E and CD3G-CD3E heterodimers preferentially associate with TR alpha and TR beta chains, respectively. The association of the CD247 homodimer is the last step of TcR assembly in the endoplasmic reticulum and is required for transport to the cell surface.

Its subcellular location is the cell membrane. Functionally, v region of the variable domain of T cell receptor (TR) beta chain that participates in the antigen recognition. Alpha-beta T cell receptors are antigen specific receptors which are essential to the immune response and are present on the cell surface of T lymphocytes. Recognize peptide-major histocompatibility (MH) (pMH) complexes that are displayed by antigen presenting cells (APC), a prerequisite for efficient T cell adaptive immunity against pathogens. Binding of alpha-beta TR to pMH complex initiates TR-CD3 clustering on the cell surface and intracellular activation of LCK that phosphorylates the ITAM motifs of CD3G, CD3D, CD3E and CD247 enabling the recruitment of ZAP70. In turn ZAP70 phosphorylates LAT, which recruits numerous signaling molecules to form the LAT signalosome. The LAT signalosome propagates signal branching to three major signaling pathways, the calcium, the mitogen-activated protein kinase (MAPK) kinase and the nuclear factor NF-kappa-B (NF-kB) pathways, leading to the mobilization of transcription factors that are critical for gene expression and essential for T cell growth and differentiation. The T cell repertoire is generated in the thymus, by V-(D)-J rearrangement. This repertoire is then shaped by intrathymic selection events to generate a peripheral T cell pool of self-MH restricted, non-autoaggressive T cells. Post-thymic interaction of alpha-beta TR with the pMH complexes shapes TR structural and functional avidity. The protein is T cell receptor beta variable 5-5 of Homo sapiens (Human).